The sequence spans 236 residues: MEASVHIGNSVPHAHLHSAAPARPADPVRPDGSRRALRIGLGGPVGSGKTATVAALCRALRDRLSIAVVTNDIYTREDADFLLRHAILPAERILAVETGACPHTAIRDDISANLEAVEQLEATVGPLDLILVESGGDNLTATFSKGLVDAQIFVIDVAGGDDIPRKGGPGITTADLLVINKTDLAPHVGSDLQAMAADAKRQRGERPVAFTSLTADNGVGPVADWVGARLTAWTAA.

Residues 1–40 are disordered; that stretch reads MEASVHIGNSVPHAHLHSAAPARPADPVRPDGSRRALRIG. 43 to 50 lines the GTP pocket; the sequence is GPVGSGKT.

It belongs to the SIMIBI class G3E GTPase family. UreG subfamily. As to quaternary structure, homodimer. UreD, UreF and UreG form a complex that acts as a GTP-hydrolysis-dependent molecular chaperone, activating the urease apoprotein by helping to assemble the nickel containing metallocenter of UreC. The UreE protein probably delivers the nickel.

The protein resides in the cytoplasm. Facilitates the functional incorporation of the urease nickel metallocenter. This process requires GTP hydrolysis, probably effectuated by UreG. The polypeptide is Urease accessory protein UreG 2 (Saccharopolyspora erythraea (strain ATCC 11635 / DSM 40517 / JCM 4748 / NBRC 13426 / NCIMB 8594 / NRRL 2338)).